The following is a 967-amino-acid chain: Zinc finger protein with KRAB and SCAN domains 2 (967 aa).

Lys22 participates in a covalent cross-link: Glycyl lysine isopeptide (Lys-Gly) (interchain with G-Cter in SUMO2). One can recognise an SCAN box domain in the interval Arg45–Thr127. The segment at Trp150–Leu205 is disordered. A compositionally biased stretch (basic and acidic residues) spans Val167 to Arg185. The KRAB domain occupies Val229–Ile300. Residues Lys242, Lys259, Lys277, Lys337, Lys482, and Lys529 each participate in a glycyl lysine isopeptide (Lys-Gly) (interchain with G-Cter in SUMO2) cross-link. The segment covering Arg586–Ser602 has biased composition (low complexity). The interval Arg586–Gln626 is disordered. A phosphoserine mark is found at Ser591 and Ser600. Glycyl lysine isopeptide (Lys-Gly) (interchain with G-Cter in SUMO2) cross-links involve residues Lys734, Lys745, and Lys752. 6 C2H2-type zinc fingers span residues Tyr775 to His797, Phe803 to His825, Tyr831 to His853, Tyr859 to His881, Tyr887 to His909, and Tyr915 to His937. The tract at residues Lys941–Phe967 is disordered. The span at Asn954 to Phe967 shows a compositional bias: basic and acidic residues.

This sequence belongs to the krueppel C2H2-type zinc-finger protein family.

The protein localises to the nucleus. Functionally, may be involved in transcriptional regulation. This chain is Zinc finger protein with KRAB and SCAN domains 2 (ZKSCAN2), found in Homo sapiens (Human).